The sequence spans 383 residues: Acetylornithine deacetylase (383 aa).

Zn(2+) is bound at residue H80. D82 is a catalytic residue. Residue D112 participates in Zn(2+) binding. The active site involves E144. 3 residues coordinate Zn(2+): E145, E169, and H355.

This sequence belongs to the peptidase M20A family. ArgE subfamily. Homodimer. Zn(2+) serves as cofactor. Requires Co(2+) as cofactor. Glutathione is required as a cofactor.

The protein localises to the cytoplasm. The enzyme catalyses N(2)-acetyl-L-ornithine + H2O = L-ornithine + acetate. It participates in amino-acid biosynthesis; L-arginine biosynthesis; L-ornithine from N(2)-acetyl-L-ornithine (linear): step 1/1. Catalyzes the hydrolysis of the amide bond of N(2)-acetylated L-amino acids. Cleaves the acetyl group from N-acetyl-L-ornithine to form L-ornithine, an intermediate in L-arginine biosynthesis pathway, and a branchpoint in the synthesis of polyamines. The protein is Acetylornithine deacetylase of Escherichia coli O9:H4 (strain HS).